The primary structure comprises 493 residues: GTPase Der (493 aa).

2 consecutive EngA-type G domains span residues 3 to 166 (PVVA…AEAL) and 206 to 379 (IKLA…KSAT). GTP contacts are provided by residues 9-16 (GRPNVGKS), 56-60 (DTGGI), 118-121 (NKVD), 212-219 (GRPNVGKS), 259-263 (DTAGV), and 324-327 (NKWD). Positions 380-464 (TRVGTSVLTR…PIRIQFQNSE (85 aa)) constitute a KH-like domain.

The protein belongs to the TRAFAC class TrmE-Era-EngA-EngB-Septin-like GTPase superfamily. EngA (Der) GTPase family. As to quaternary structure, associates with the 50S ribosomal subunit.

GTPase that plays an essential role in the late steps of ribosome biogenesis. The chain is GTPase Der from Vibrio atlanticus (strain LGP32) (Vibrio splendidus (strain Mel32)).